The chain runs to 159 residues: Transcription elongation factor GreA (159 aa).

It belongs to the GreA/GreB family.

Functionally, necessary for efficient RNA polymerase transcription elongation past template-encoded arresting sites. The arresting sites in DNA have the property of trapping a certain fraction of elongating RNA polymerases that pass through, resulting in locked ternary complexes. Cleavage of the nascent transcript by cleavage factors such as GreA or GreB allows the resumption of elongation from the new 3'terminus. GreA releases sequences of 2 to 3 nucleotides. This Buchnera aphidicola subsp. Acyrthosiphon pisum (strain APS) (Acyrthosiphon pisum symbiotic bacterium) protein is Transcription elongation factor GreA.